The chain runs to 292 residues: Bis(5'-nucleosyl)-tetraphosphatase, symmetrical (292 aa).

This sequence belongs to the Ap4A hydrolase family.

It catalyses the reaction P(1),P(4)-bis(5'-adenosyl) tetraphosphate + H2O = 2 ADP + 2 H(+). Hydrolyzes diadenosine 5',5'''-P1,P4-tetraphosphate to yield ADP. This is Bis(5'-nucleosyl)-tetraphosphatase, symmetrical from Yersinia enterocolitica serotype O:8 / biotype 1B (strain NCTC 13174 / 8081).